The primary structure comprises 72 residues: Translation initiation factor IF-1 (72 aa).

Residues 1–72 (MAKEDNIEMQ…SKGRIVFRSR (72 aa)) form the S1-like domain.

It belongs to the IF-1 family. Component of the 30S ribosomal translation pre-initiation complex which assembles on the 30S ribosome in the order IF-2 and IF-3, IF-1 and N-formylmethionyl-tRNA(fMet); mRNA recruitment can occur at any time during PIC assembly.

The protein localises to the cytoplasm. Functionally, one of the essential components for the initiation of protein synthesis. Stabilizes the binding of IF-2 and IF-3 on the 30S subunit to which N-formylmethionyl-tRNA(fMet) subsequently binds. Helps modulate mRNA selection, yielding the 30S pre-initiation complex (PIC). Upon addition of the 50S ribosomal subunit IF-1, IF-2 and IF-3 are released leaving the mature 70S translation initiation complex. The sequence is that of Translation initiation factor IF-1 from Shewanella pealeana (strain ATCC 700345 / ANG-SQ1).